The sequence spans 520 residues: 2-methylcitrate dehydratase, mitochondrial (520 aa).

The N-terminal 37 residues, 1–37, are a transit peptide targeting the mitochondrion; that stretch reads MRAFRSAANFGAASNIYRKSFTPASIASNRFVSARMS.

This sequence belongs to the PrpD family. As to quaternary structure, monomer.

It localises to the mitochondrion. It carries out the reaction (2S,3S)-2-methylcitrate = 2-methyl-cis-aconitate + H2O. It functions in the pathway organic acid metabolism; propanoate degradation. Several bivalent metal ions, such as nickel, copper, zinc, mercury, and lead, inhibit the activity to some extent. Inhibited by structural analogs such as citrate, cis-aconitate, isocitrate, 2-methylisocitrate, tricarballylate and fluorocitrate, but not by trans-aconitate or adipate. In terms of biological role, component of the methylcitrate cycle that catalyzes the dehydration of 2-methylcitrate to 2-methyl-cis-aconitate. The methylcitrate cycle is a metabolic pathway for the consumption of propionic acid. This Yarrowia lipolytica (strain CLIB 122 / E 150) (Yeast) protein is 2-methylcitrate dehydratase, mitochondrial.